The sequence spans 71 residues: Large ribosomal subunit protein bL31 (71 aa).

Residues C16, C18, C37, and C40 each coordinate Zn(2+).

Belongs to the bacterial ribosomal protein bL31 family. Type A subfamily. As to quaternary structure, part of the 50S ribosomal subunit. It depends on Zn(2+) as a cofactor.

In terms of biological role, binds the 23S rRNA. In Wigglesworthia glossinidia brevipalpis, this protein is Large ribosomal subunit protein bL31.